The following is a 347-amino-acid chain: DnaJ homolog subfamily C member 22 (347 aa).

A TM2 domain is found at 4–50 (GLLMTYTLWAVGGPAGLHHLYLGRDSHALLWMLTLGGGGLGWLWEFW). 7 consecutive transmembrane segments (helical) span residues 5–25 (LLMT…HLYL), 32–52 (LLWM…FWML), 81–101 (FVAQ…SLSF), 105–125 (FYIV…AAVG), 135–155 (LGAA…ILPI), 186–206 (GLAY…HTAV), and 218–238 (FLSW…VLLL). Residues 277 to 347 (LALQVFGLSE…GSWRWEETSF (71 aa)) form the J domain.

The protein localises to the membrane. May function as a co-chaperone. The polypeptide is DnaJ homolog subfamily C member 22 (DNAJC22) (Bos taurus (Bovine)).